The sequence spans 362 residues: Alpha-tubulin N-acetyltransferase (362 aa).

The N-acetyltransferase domain occupies 1–177 (MQFGCNVAEA…NNFLMLDASI (177 aa)). Residues 111–124 (FYTHETVQRRGIGT) and 147–156 (SPKLLAFLSK) contribute to the acetyl-CoA site.

The protein belongs to the acetyltransferase ATAT1 family.

The catalysed reaction is L-lysyl-[alpha-tubulin] + acetyl-CoA = N(6)-acetyl-L-lysyl-[alpha-tubulin] + CoA + H(+). Functionally, specifically acetylates 'Lys-40' in alpha-tubulin on the lumenal side of microtubules. Promotes microtubule destabilization and accelerates microtubule dynamics; this activity may be independent of acetylation activity. Acetylates alpha-tubulin with a slow enzymatic rate, due to a catalytic site that is not optimized for acetyl transfer. Enters the microtubule through each end and diffuses quickly throughout the lumen of microtubules. Acetylates only long/old microtubules because of its slow acetylation rate since it does not have time to act on dynamically unstable microtubules before the enzyme is released. The protein is Alpha-tubulin N-acetyltransferase of Giardia intestinalis (strain ATCC 50803 / WB clone C6) (Giardia lamblia).